A 224-amino-acid polypeptide reads, in one-letter code: Response regulator protein GraR (224 aa).

The Response regulatory domain maps to 2 to 115 (QILLVEDDNT…VLIAKLQAIY (114 aa)). Asp51 bears the 4-aspartylphosphate mark. The ompR/PhoB-type DNA-binding region spans 126-224 (KRTLTWQDAI…KVGKGYMAHE (99 aa)). Residues Thr128, Thr130, and Thr149 each carry the phosphothreonine modification.

In terms of assembly, interacts with GraX. Phosphorylated by GraS. Phosphorylated by Stk1; phosphorylation increases the DNA-binding activity of GraR.

Its subcellular location is the cytoplasm. In terms of biological role, member of the two-component regulatory system GraR/GraS involved in resistance against cationic antimicrobial peptides (CAMPs). Upon phosphorylation by GraS, functions as a transcription regulator by direct binding to promoter regions of target genes such as adhesins, exoproteins, transporters, toxins, and proteins involved in cell wall synthesis. Down-regulates the expression of many genes involved in RNA and amino acid synthesis or glycolysis. The polypeptide is Response regulator protein GraR (graR) (Staphylococcus aureus (strain bovine RF122 / ET3-1)).